A 154-amino-acid chain; its full sequence is MVFVKGQKKATKGSTQSGEEKTASTTPKVTKTPTEGGEKKRKKRKSDYTSFSTYIHKLLKQITPPTNAKSNEKGDRKFTISSKAMSVMNSFVHDIFDRIATEASGLAKKKKRQTLHSRDIQVAVRIILTGELAKHAILQGMTAVNKYNPTESKN.

The span at 1-11 shows a compositional bias: basic residues; the sequence is MVFVKGQKKAT. The interval 1 to 48 is disordered; it reads MVFVKGQKKATKGSTQSGEEKTASTTPKVTKTPTEGGEKKRKKRKSDY. Positions 12–27 are enriched in polar residues; the sequence is KGSTQSGEEKTASTTP.

The protein belongs to the histone H2B family. In terms of assembly, the nucleosome is a histone octamer containing two molecules each of H2A, H2B, H3 and H4 assembled in one H3-H4 heterotetramer and two H2A-H2B heterodimers. The octamer wraps approximately 147 bp of DNA.

It is found in the nucleus. The protein resides in the chromosome. Functionally, core component of nucleosome which plays a central role in DNA double strand break (DSB) repair. Nucleosomes wrap and compact DNA into chromatin, limiting DNA accessibility to the cellular machineries which require DNA as a template. Histones thereby play a central role in transcription regulation, DNA repair, DNA replication and chromosomal stability. DNA accessibility is regulated via a complex set of post-translational modifications of histones, also called histone code, and nucleosome remodeling. This Dictyostelium discoideum (Social amoeba) protein is Histone H2B.v3 (H2Bv3).